Here is a 269-residue protein sequence, read N- to C-terminus: Tryptophan synthase alpha chain (269 aa).

Active-site proton acceptor residues include glutamate 50 and aspartate 61.

The protein belongs to the TrpA family. As to quaternary structure, tetramer of two alpha and two beta chains.

The catalysed reaction is (1S,2R)-1-C-(indol-3-yl)glycerol 3-phosphate + L-serine = D-glyceraldehyde 3-phosphate + L-tryptophan + H2O. It functions in the pathway amino-acid biosynthesis; L-tryptophan biosynthesis; L-tryptophan from chorismate: step 5/5. The alpha subunit is responsible for the aldol cleavage of indoleglycerol phosphate to indole and glyceraldehyde 3-phosphate. The sequence is that of Tryptophan synthase alpha chain from Francisella tularensis subsp. tularensis (strain FSC 198).